Reading from the N-terminus, the 175-residue chain is Archaemetzincin (175 aa).

His-125 lines the Zn(2+) pocket. Glu-126 (proton acceptor) is an active-site residue. The Zn(2+) site is built by His-129, His-135, Cys-136, Cys-141, Cys-160, and Cys-163.

Belongs to the peptidase M54 family. Monomer. Zn(2+) is required as a cofactor.

In terms of biological role, probable zinc metalloprotease whose natural substrate is unknown. Does not show endo- or exopeptidase activity against resorufin labeled casein, p-nitroanilide (pNA), amidomethylcoumarin (AMC) (one to three amino acids in length), and hippuryl-aminoacid substrates. The chain is Archaemetzincin from Methanopyrus kandleri (strain AV19 / DSM 6324 / JCM 9639 / NBRC 100938).